We begin with the raw amino-acid sequence, 128 residues long: Azurin (128 aa).

Residues 1–128 (AECKVTVDST…SMMKGTVTVK (128 aa)) form the Plastocyanin-like domain. Cysteine 3 and cysteine 26 form a disulfide bridge. Residues histidine 46, cysteine 112, histidine 117, and methionine 121 each coordinate Cu cation.

The protein localises to the periplasm. Its function is as follows. Transfers electrons from cytochrome c551 to cytochrome oxidase. This is Azurin from Pseudomonas fluorescens biotype A.